The following is an 82-amino-acid chain: UPF0153 protein VC_1057 (82 aa).

Belongs to the UPF0153 family.

The chain is UPF0153 protein VC_1057 from Vibrio cholerae serotype O1 (strain ATCC 39315 / El Tor Inaba N16961).